A 259-amino-acid chain; its full sequence is Small ribosomal subunit protein uS2 (259 aa).

The tract at residues 224 to 259 (GKQGEDDQQVAPAEDVAEEVSDESLQDLKNSVEGND) is disordered. Positions 238 to 248 (DVAEEVSDESL) are enriched in acidic residues. The segment covering 250–259 (DLKNSVEGND) has biased composition (polar residues).

It belongs to the universal ribosomal protein uS2 family.

This chain is Small ribosomal subunit protein uS2, found in Limosilactobacillus fermentum (strain NBRC 3956 / LMG 18251) (Lactobacillus fermentum).